The following is a 296-amino-acid chain: GTPase Era (296 aa).

The 168-residue stretch at 7-174 folds into the Era-type G domain; it reads RTGFVAVVGR…LDEIAARLPE (168 aa). The tract at residues 15–22 is G1; the sequence is GRPNVGKS. 15–22 serves as a coordination point for GTP; sequence GRPNVGKS. The interval 41-45 is G2; that stretch reads QTTRH. Residues 62–65 form a G3 region; sequence DTPG. GTP contacts are provided by residues 62-66 and 123-126; these read DTPGF and SKID. The interval 123–126 is G4; the sequence is SKID. The segment at 153 to 155 is G5; the sequence is VSA. A KH type-2 domain is found at 205–281; it reads VGDELPYGCT…HLEVYIKVRK (77 aa).

It belongs to the TRAFAC class TrmE-Era-EngA-EngB-Septin-like GTPase superfamily. Era GTPase family. Monomer.

The protein resides in the cytoplasm. The protein localises to the cell inner membrane. Functionally, an essential GTPase that binds both GDP and GTP, with rapid nucleotide exchange. Plays a role in 16S rRNA processing and 30S ribosomal subunit biogenesis and possibly also in cell cycle regulation and energy metabolism. The sequence is that of GTPase Era from Bordetella petrii (strain ATCC BAA-461 / DSM 12804 / CCUG 43448).